A 123-amino-acid polypeptide reads, in one-letter code: Large ribosomal subunit protein uL14 (123 aa).

The protein belongs to the universal ribosomal protein uL14 family. Part of the 50S ribosomal subunit. Forms a cluster with proteins L3 and L19. In the 70S ribosome, L14 and L19 interact and together make contacts with the 16S rRNA in bridges B5 and B8.

Binds to 23S rRNA. Forms part of two intersubunit bridges in the 70S ribosome. This Cronobacter sakazakii (strain ATCC BAA-894) (Enterobacter sakazakii) protein is Large ribosomal subunit protein uL14.